The sequence spans 865 residues: Prominin-1 (865 aa).

The N-terminal stretch at 1 to 19 (MALVLGSLLLLGLCGNSFS) is a signal peptide. The Extracellular segment spans residues 20 to 108 (GGQPSSTDAP…GLKIVYYEAG (89 aa)). A helical membrane pass occupies residues 109–129 (IILCCVLGLLFIILMPLVGYF). At 130 to 157 (FCMCRCCNKCGGEMHQRQKENGPFLRKC) the chain is on the cytoplasmic side. A helical membrane pass occupies residues 158 to 178 (FAISLLVICIIISIGIFYGFV). Over 179–433 (ANHQVRTRIK…LPTLEEYDSY (255 aa)) the chain is Extracellular. N-linked (GlcNAc...) asparagine glycosylation occurs at Asn-220. Residues Lys-225, Lys-257, and Lys-264 each carry the N6-acetyllysine modification. Residues Asn-274, Asn-395, and Asn-414 are each glycosylated (N-linked (GlcNAc...) asparagine). Residues 434 to 454 (WWLGGLVICSLLTLIVIFYYL) traverse the membrane as a helical segment. At 455–486 (GLLCGVCGYDRHATPTTRGCVSNTGGVFLMVG) the chain is on the cytoplasmic side. The helical transmembrane segment at 487–507 (VGLSFLFCWILMIIVVLTFVF) threads the bilayer. Residues 508-792 (GANVEKLICE…LCSYIIDPLN (285 aa)) lie on the Extracellular side of the membrane. 4 N-linked (GlcNAc...) asparagine glycosylation sites follow: Asn-548, Asn-580, Asn-729, and Asn-730. A helical transmembrane segment spans residues 793–813 (LFWFGIGKATVFLLPALIFAV). Over 814-865 (KLAKYYRRMDSEDVYDDVETIPMKNMENGNNGYHKDHVYGIHNPVMTSPSQH) the chain is Cytoplasmic. Ser-863 is modified (phosphoserine).

The protein belongs to the prominin family. Interacts with CDHR1 and with actin filaments. Interacts with NAT8 and NAT8B. Isoform 1 and isoform 2 are glycosylated. In terms of processing, acetylation at Lys-225, Lys-257 and Lys-264 by NAT8 and NAT8B may control PROM1 protein expression and its function in cell apoptosis. In terms of tissue distribution, isoform 1 is selectively expressed on CD34 hematopoietic stem and progenitor cells in adult and fetal bone marrow, fetal liver, cord blood and adult peripheral blood. Isoform 1 is not detected on other blood cells. Isoform 1 is also expressed in a number of non-lymphoid tissues including retina, pancreas, placenta, kidney, liver, lung, brain and heart. Found in saliva within small membrane particles. Isoform 2 is predominantly expressed in fetal liver, skeletal muscle, kidney, and heart as well as adult pancreas, kidney, liver, lung, and placenta. Isoform 2 is highly expressed in fetal liver, low in bone marrow, and barely detectable in peripheral blood. Isoform 2 is expressed on hematopoietic stem cells and in epidermal basal cells (at protein level). Expressed in adult retina by rod and cone photoreceptor cells (at protein level).

The protein localises to the apical cell membrane. It localises to the cell projection. Its subcellular location is the microvillus membrane. It is found in the cilium. The protein resides in the photoreceptor outer segment. The protein localises to the endoplasmic reticulum. It localises to the endoplasmic reticulum-Golgi intermediate compartment. Its function is as follows. May play a role in cell differentiation, proliferation and apoptosis. Binds cholesterol in cholesterol-containing plasma membrane microdomains and may play a role in the organization of the apical plasma membrane in epithelial cells. During early retinal development acts as a key regulator of disk morphogenesis. Involved in regulation of MAPK and Akt signaling pathways. In neuroblastoma cells suppresses cell differentiation such as neurite outgrowth in a RET-dependent manner. The protein is Prominin-1 (PROM1) of Homo sapiens (Human).